Consider the following 113-residue polypeptide: Large ribosomal subunit protein eL36z (113 aa).

A compositionally biased stretch (basic residues) spans 78–88 (RKLGTHKRAKR). A disordered region spans residues 78–113 (RKLGTHKRAKRKREEMSSVLRKMRSLGGAAAAEKKM).

This sequence belongs to the eukaryotic ribosomal protein eL36 family.

The sequence is that of Large ribosomal subunit protein eL36z (RPL36A) from Arabidopsis thaliana (Mouse-ear cress).